A 120-amino-acid chain; its full sequence is Large ribosomal subunit protein uL18 (120 aa).

It belongs to the universal ribosomal protein uL18 family. Part of the 50S ribosomal subunit; part of the 5S rRNA/L5/L18/L25 subcomplex. Contacts the 5S and 23S rRNAs.

Its function is as follows. This is one of the proteins that bind and probably mediate the attachment of the 5S RNA into the large ribosomal subunit, where it forms part of the central protuberance. This Staphylococcus haemolyticus (strain JCSC1435) protein is Large ribosomal subunit protein uL18.